An 870-amino-acid polypeptide reads, in one-letter code: Ribonucleoside-diphosphate reductase large subunit (870 aa).

Residues methionine 16–lysine 110 enclose the ATP-cone domain. Residues lysine 20–arginine 21, glutamate 26–lysine 32, threonine 71, and aspartate 75 contribute to the ATP site. Serine 235 is a binding site for GDP. Cysteines 236 and 463 form a disulfide. DTTP is bound by residues aspartate 244–isoleucine 246, lysine 261, arginine 274, and arginine 281–glycine 282. Asparagine 446 is a binding site for GDP. The active-site Proton acceptor is asparagine 446. Catalysis depends on cysteine 448, which acts as the Cysteine radical intermediate. GDP is bound by residues glutamate 450 and threonine 632 to threonine 635. The Proton acceptor role is filled by glutamate 450. A disordered region spans residues lysine 789–tyrosine 854. Over residues asparagine 796–serine 811 the composition is skewed to low complexity. Polar residues predominate over residues asparagine 812–threonine 831. Low complexity predominate over residues glutamine 832–glutamine 844.

The protein belongs to the ribonucleoside diphosphate reductase large chain family. In terms of assembly, heterodimer of a large and a small subunit.

The protein resides in the cytoplasm. It carries out the reaction a 2'-deoxyribonucleoside 5'-diphosphate + [thioredoxin]-disulfide + H2O = a ribonucleoside 5'-diphosphate + [thioredoxin]-dithiol. With respect to regulation, under complex allosteric control mediated by deoxynucleoside triphosphates and ATP binding to separate specificity and activation sites on the large subunit. The type of nucleotide bound at the specificity site determines substrate preference. It seems probable that ATP makes the enzyme reduce CDP and UDP, dGTP favors ADP reduction and dTTP favors GDP reduction. Stimulated by ATP and inhibited by dATP binding to the activity site. Functionally, provides the precursors necessary for DNA synthesis. Catalyzes the biosynthesis of deoxyribonucleotides from the corresponding ribonucleotides. The sequence is that of Ribonucleoside-diphosphate reductase large subunit (rnrA) from Dictyostelium discoideum (Social amoeba).